The chain runs to 371 residues: Tetraacyldisaccharide 4'-kinase (371 aa).

48–55 (SAGGTGKT) contacts ATP.

The protein belongs to the LpxK family.

It carries out the reaction a lipid A disaccharide + ATP = a lipid IVA + ADP + H(+). Its pathway is glycolipid biosynthesis; lipid IV(A) biosynthesis; lipid IV(A) from (3R)-3-hydroxytetradecanoyl-[acyl-carrier-protein] and UDP-N-acetyl-alpha-D-glucosamine: step 6/6. Its function is as follows. Transfers the gamma-phosphate of ATP to the 4'-position of a tetraacyldisaccharide 1-phosphate intermediate (termed DS-1-P) to form tetraacyldisaccharide 1,4'-bis-phosphate (lipid IVA). This Chlorobium chlorochromatii (strain CaD3) protein is Tetraacyldisaccharide 4'-kinase.